We begin with the raw amino-acid sequence, 403 residues long: Tripartite motif-containing protein 59 (403 aa).

The segment at 10–60 adopts an RING-type zinc-finger fold; sequence CPICYSIFEDPRVLPCSHTFCRNCLENILQASGNFYIWRPLRIPLKCPNCR. The B box-type zinc-finger motif lies at 92–134; it reads PDIVTCPEHYRQPLNVYCLLDKKLVCGHCLTIGQHHGHPIDDL. Residues cysteine 97, histidine 100, cysteine 120, and histidine 126 each contribute to the Zn(2+) site. Residues 163–246 are a coiled coil; the sequence is LIEKLKEQKS…ALTISLQEES (84 aa). The chain crosses the membrane as a helical span at residues 329-349; that stretch reads ILNIVVVTLISVILMSILFFN.

This sequence belongs to the TRIM/RBCC family. Interacts with ECSIT.

It localises to the endoplasmic reticulum membrane. It carries out the reaction S-ubiquitinyl-[E2 ubiquitin-conjugating enzyme]-L-cysteine + [acceptor protein]-L-lysine = [E2 ubiquitin-conjugating enzyme]-L-cysteine + N(6)-ubiquitinyl-[acceptor protein]-L-lysine.. The protein operates within protein modification; protein ubiquitination. In terms of biological role, E3 ubiquitin ligase involved in different processes such as development and immune response. Serves as a negative regulator for innate immune signaling pathways by suppressing RLR-induced activation of IRF3/7 and NF-kappa-B via interaction with adapter ECSIT. Regulates autophagy through modulating both the transcription and the ubiquitination of BECN1. On the one hand, regulates the transcription of BECN1 through negatively modulating the NF-kappa-B pathway. On the other hand, regulates TRAF6-mediated 'Lys-63'-linked ubiquitination of BECN1, thus affecting the formation of the BECN1-PIK3C3 complex. In addition, mediates 'Lys-48'-linked ubiquitination of TRAF6 and thereby promotes TRAF6 proteasomal degradation. Also acts as a critical regulator for early embryo development from blastocyst stage to gastrula through modulating F-actin assembly and WASH1 'Lys-63'-linked ubiquitination. This Homo sapiens (Human) protein is Tripartite motif-containing protein 59 (TRIM59).